Here is a 397-residue protein sequence, read N- to C-terminus: Tryptophan synthase beta chain 1 (397 aa).

An N6-(pyridoxal phosphate)lysine modification is found at Lys94.

It belongs to the TrpB family. Tetramer of two alpha and two beta chains. It depends on pyridoxal 5'-phosphate as a cofactor.

It catalyses the reaction (1S,2R)-1-C-(indol-3-yl)glycerol 3-phosphate + L-serine = D-glyceraldehyde 3-phosphate + L-tryptophan + H2O. It participates in amino-acid biosynthesis; L-tryptophan biosynthesis; L-tryptophan from chorismate: step 5/5. Functionally, the beta subunit is responsible for the synthesis of L-tryptophan from indole and L-serine. In Archaeoglobus fulgidus (strain ATCC 49558 / DSM 4304 / JCM 9628 / NBRC 100126 / VC-16), this protein is Tryptophan synthase beta chain 1 (trpB1).